An 862-amino-acid chain; its full sequence is Leucine--tRNA ligase (862 aa).

A 'HIGH' region motif is present at residues 49 to 59; sequence PYPSGRIHMGH. Positions 625–629 match the 'KMSKS' region motif; it reads KMSKS. K628 contacts ATP.

This sequence belongs to the class-I aminoacyl-tRNA synthetase family.

It localises to the cytoplasm. It carries out the reaction tRNA(Leu) + L-leucine + ATP = L-leucyl-tRNA(Leu) + AMP + diphosphate. The sequence is that of Leucine--tRNA ligase from Paramagnetospirillum magneticum (strain ATCC 700264 / AMB-1) (Magnetospirillum magneticum).